A 132-amino-acid polypeptide reads, in one-letter code: Minor structural pilin EpdB (132 aa).

The propeptide occupies M1–G4. The QXSXEXXXL signature appears at E9 to V19.

Post-translationally, the N-terminus is probably cleaved by the prepilin peptidase EppA, which recognizes the class III signal sequence.

The protein resides in the secreted. It is found in the cell surface. It localises to the fimbrium. Minor component of the type IV-like pili. Essential for pili formation. The protein is Minor structural pilin EpdB of Methanococcus maripaludis (strain DSM 14266 / JCM 13030 / NBRC 101832 / S2 / LL).